Here is a 349-residue protein sequence, read N- to C-terminus: Dihydroorotase (349 aa).

Zn(2+) is bound by residues histidine 17 and histidine 19. Substrate contacts are provided by residues 19-21 (HLR) and asparagine 45. Zn(2+) contacts are provided by lysine 105, histidine 142, and histidine 180. Lysine 105 carries the N6-carboxylysine modification. Histidine 142 is a binding site for substrate. Residue leucine 225 participates in substrate binding. Position 253 (aspartate 253) interacts with Zn(2+). Aspartate 253 is a catalytic residue. The substrate site is built by histidine 257 and alanine 269.

It belongs to the metallo-dependent hydrolases superfamily. DHOase family. Class II DHOase subfamily. In terms of assembly, homodimer. Zn(2+) is required as a cofactor.

The catalysed reaction is (S)-dihydroorotate + H2O = N-carbamoyl-L-aspartate + H(+). It functions in the pathway pyrimidine metabolism; UMP biosynthesis via de novo pathway; (S)-dihydroorotate from bicarbonate: step 3/3. Functionally, catalyzes the reversible cyclization of carbamoyl aspartate to dihydroorotate. This chain is Dihydroorotase, found in Nitrosomonas europaea (strain ATCC 19718 / CIP 103999 / KCTC 2705 / NBRC 14298).